A 68-amino-acid chain; its full sequence is Conotoxin Lp5.2 (68 aa).

An N-terminal signal peptide occupies residues 1-19 (MRCVPVFIILLLLASPAAP). Positions 20 to 54 (KSLETRIQNDLIRAGLTDADLKTEKGFLSGLLNVA) are excised as a propeptide.

Belongs to the conotoxin T superfamily. Contains 2 disulfide bonds that can be either 'C1-C3, C2-C4' or 'C1-C4, C2-C3', since these disulfide connectivities have been observed for conotoxins with cysteine framework V (for examples, see AC P0DQQ7 and AC P81755). In terms of tissue distribution, expressed by the venom duct.

It localises to the secreted. In Conus leopardus (Leopard cone), this protein is Conotoxin Lp5.2.